We begin with the raw amino-acid sequence, 590 residues long: Regulatory solute carrier protein family 1 member 1 (590 aa).

4 disordered regions span residues 1–116, 144–234, 277–331, and 359–466; these read MSSS…TQGL, EEGW…PDSE, SPSS…AEES, and EEVT…SHRT. Polar residues predominate over residues 16–35; that stretch reads SSGQSPEAGNPTSLARSVSA. The segment covering 78–91 has biased composition (low complexity); that stretch reads SPCAAAAAPSSAMP. A compositionally biased stretch (polar residues) spans 150–161; the sequence is ENQNPSQVNDLQ. Composition is skewed to basic and acidic residues over residues 162–179 and 188–203; these read QHQEPENARHEAGPRDAP and PGERQQKHEVADREAT. Low complexity predominate over residues 313–331; sequence SSSSVCGSSQPPAESAEES. Over residues 362-376 the composition is skewed to polar residues; the sequence is TCQSEGTAWGQTRVN. Basic and acidic residues-rich tracts occupy residues 380–395 and 404–420; these read RWTESERRTQDEDRPQ and VKTEKLTDASPDTRIED. The segment covering 451-465 has biased composition (polar residues); sequence SVTVTSAETSNQSHR. A UBA domain is found at 544-584; that stretch reads GFPAADIDRILRAGFTLQEALGALHRVGGNADLALLVLLAK.

Interacts with YRDC. Highly expressed in renal outer medulla, renal inner medulla, duodenum, ileum and jejunum. Moderately expressed in renal outer cortex, renal papilla, brain and liver.

Its subcellular location is the cell membrane. The protein resides in the nucleus. The protein localises to the golgi apparatus. It is found in the trans-Golgi network. Functionally, mediates transcriptional and post-transcriptional regulation of SLC5A1. Inhibits a dynamin and PKC-dependent exocytotic pathway of SLC5A1. Also involved in transcriptional regulation of SLC22A2. Exhibits glucose-dependent, short-term inhibition of SLC5A1 and SLC22A2 by inhibiting the release of vesicles from the trans-Golgi network. In Oryctolagus cuniculus (Rabbit), this protein is Regulatory solute carrier protein family 1 member 1 (RSC1A1).